The sequence spans 120 residues: UPF0231 protein YacL (120 aa).

This sequence belongs to the UPF0231 family.

The protein is UPF0231 protein YacL (yacL) of Shigella flexneri.